A 904-amino-acid chain; its full sequence is Putative pentatricopeptide repeat-containing protein At1g19290 (904 aa).

PPR repeat units follow at residues 154-188, 189-223, 224-254, 260-294, 295-329, 330-364, 365-399, 400-434, 435-469, 470-504, 505-539, 540-574, 575-609, 610-644, 645-679, 718-753, 754-788, 789-823, and 824-858; these read SPTV…GRIP, SLLS…EVSP, DVFT…TESS, NVVT…GVSR, NVVT…KLVA, DQHM…GVRT, NTTI…SLKP, DHHT…EVVP, TVMT…GVNA, DEIS…GLLT, DTIT…RCKP, AVQT…GIFP, TIEM…GLTP, TVAT…GITL, NVNI…DLLL, NNIV…RFIP, DEYT…GIIP, NIVT…GITP, and NAIT…GLVR.

Belongs to the PPR family. P subfamily.

This is Putative pentatricopeptide repeat-containing protein At1g19290 from Arabidopsis thaliana (Mouse-ear cress).